The primary structure comprises 311 residues: Giardin subunit alpha-8 (311 aa).

4 Annexin repeats span residues 5 to 73, 75 to 146, 154 to 223, and 227 to 295; these read RKAY…IRCW, NRHE…DRWM, NNVK…AAHY, and EPSK…SLWR.

Belongs to the annexin family. Giardin subunit alpha subfamily.

The protein localises to the cytoplasm. It is found in the cytoskeleton. Its function is as follows. Giardins are involved in parasite attachment to the intestinal mucosa and in the cytoskeletal disassembly and reassembly that marks the transition from infectious trophozoite to transmissible cyst. They may interact with other cytoskeletal proteins such as microtubules in the microribbons or crossbridges, to maintain the integrity of the ventral disk. The polypeptide is Giardin subunit alpha-8 (Giardia intestinalis (Giardia lamblia)).